Here is a 92-residue protein sequence, read N- to C-terminus: Co-chaperonin GroES (92 aa).

Belongs to the GroES chaperonin family. Heptamer of 7 subunits arranged in a ring. Interacts with the chaperonin GroEL.

It is found in the cytoplasm. Together with the chaperonin GroEL, plays an essential role in assisting protein folding. The GroEL-GroES system forms a nano-cage that allows encapsulation of the non-native substrate proteins and provides a physical environment optimized to promote and accelerate protein folding. GroES binds to the apical surface of the GroEL ring, thereby capping the opening of the GroEL channel. This is Co-chaperonin GroES from Methanosarcina mazei (strain ATCC BAA-159 / DSM 3647 / Goe1 / Go1 / JCM 11833 / OCM 88) (Methanosarcina frisia).